The sequence spans 146 residues: MVMGLGLFLLVFMLGLGLTLPTLAQDNFRYRDFLAKHYDGTPEGRNDRYCESTMRRRHLTSPCKDTNTFIHGNRHHINAICGDENGNPYGGNLRISKSPFQVTTCKLHGGSPRPPCRYRATRGSRNIVVGCENGLPVHLDESIFRP.

The N-terminal stretch at methionine 1–alanine 24 is a signal peptide. Glutamine 25 is modified (pyrrolidone carboxylic acid). Histidine 37 (proton acceptor) is an active-site residue. Residue arginine 45 participates in tRNA binding. Intrachain disulfides connect cysteine 50–cysteine 105, cysteine 63–cysteine 116, and cysteine 81–cysteine 131. The Nucleolar localization signal signature appears at arginine 55–leucine 59. TRNA-binding residues include cysteine 105 and isoleucine 127. Histidine 138 (proton donor) is an active-site residue.

The protein belongs to the pancreatic ribonuclease family. In terms of assembly, homodimer. Interacts with RNH1; inhibiting ANG ribonuclease activity. Interacts with PCNA.

The protein resides in the secreted. It is found in the nucleus. It localises to the nucleolus. Its subcellular location is the cytoplasm. The protein localises to the stress granule. With respect to regulation, has weak tRNA ribonuclease activity by itself due to partial autoinhibition by its C-terminus, which folds into a short alpha-helix that partially occludes the substrate-binding site. In absence of stress, the ribonuclease activity is inhibited by RNH1 in the cytoplasm. In response to stress, dissociates from RNH1 in the cytoplasm and associates with cytoplasmic ribosomes with vacant A-sites: ribosomes directly activate the tRNA ribonuclease activity of ANG by refolding the C-terminal alpha-helix. In response to stress, the angiogenic activity of ANG is inhibited by RNH1 in the nucleus. In terms of biological role, secreted ribonuclease that can either promote or restrict cell proliferation of target cells, depending on the context. Endocytosed in target cells via its receptor PLXNB2 and translocates to the cytoplasm or nucleus. Under stress conditions, localizes to the cytoplasm and promotes the assembly of stress granules (SGs): specifically cleaves a subset of tRNAs within anticodon loops to produce tRNA-derived stress-induced fragments (tiRNAs), resulting in translation repression and inhibition of cell proliferation. tiRNas also prevent formation of apoptosome, thereby promoting cell survival. Preferentially cleaves RNAs between a pyrimidine and an adenosine residue, suggesting that it cleaves the anticodon loop of tRNA(Ala) (32-UUAGCAU-38) after positions 33 and 36. Cleaves a subset of tRNAs, including tRNA(Ala), tRNA(Glu), tRNA(Gly), tRNA(Lys), tRNA(Val), tRNA(His), tRNA(Asp) and tRNA(Sec). Under growth conditions and in differentiated cells, translocates to the nucleus and stimulates ribosomal RNA (rRNA) transcription, including that containing the initiation site sequences of 45S rRNA, thereby promoting cell growth and proliferation. Angiogenin induces vascularization of normal and malignant tissues via its ability to promote rRNA transcription. Involved in hematopoietic stem and progenitor cell (HSPC) growth and survival by promoting rRNA transcription in growth conditions and inhibiting translation in response to stress, respectively. Mediates the crosstalk between myeloid and intestinal epithelial cells to protect the intestinal epithelial barrier integrity: secreted by myeloid cells and promotes intestinal epithelial cells proliferation and survival. Also mediates osteoclast-endothelial cell crosstalk in growing bone: produced by osteoclasts and protects the neighboring vascular cells against senescence by promoting rRNA transcription. This is Angiogenin (ANG) from Papio hamadryas (Hamadryas baboon).